We begin with the raw amino-acid sequence, 397 residues long: Xyloglucan O-acetyltransferase 3 (397 aa).

At 1-3 (MNR) the chain is on the cytoplasmic side. Residues 4–24 (FFYTVGLIFLFSFFILYSPKT) form a helical; Signal-anchor for type II membrane protein membrane-spanning segment. Topologically, residues 25 to 397 (SDLSNNVDLH…RHAFTDFTWS (373 aa)) are lumenal. 4 disulfide bridges follow: Cys48–Cys98, Cys69–Cys134, Cys78–Cys370, and Cys293–Cys366. N-linked (GlcNAc...) asparagine glycosylation occurs at Asn66. The short motif at 121–123 (GDS) is the GDS motif element. Ser123 functions as the Nucleophile in the catalytic mechanism. 3 N-linked (GlcNAc...) asparagine glycosylation sites follow: Asn162, Asn182, and Asn294. Catalysis depends on Asp365, which acts as the Proton donor. The DXXH motif motif lies at 365–368 (DCVH). His368 serves as the catalytic Proton acceptor.

This sequence belongs to the PC-esterase family. TBL subfamily.

It is found in the golgi apparatus membrane. Xyloglucan acetyltransferase that catalyzes the acetylation of fucosylated Gal residues on xyloglucan side chains. Predominantly catalyze 6-O-monoacetylation of Gal residues in the Fuc-Gal-Xyl trisaccharide side chains of xyloglucan oligomers. This Populus trichocarpa (Western balsam poplar) protein is Xyloglucan O-acetyltransferase 3.